Here is a 340-residue protein sequence, read N- to C-terminus: Small ribosomal subunit biogenesis GTPase RsgA (340 aa).

The segment covering 20-34 (ERAERAERRARRDDT) has biased composition (basic and acidic residues). The disordered stretch occupies residues 20-42 (ERAERAERRARRDDTSLDAGDYG). One can recognise a CP-type G domain in the interval 116–274 (RGQLKPVAAN…LIDSPGIREF (159 aa)). Residues 163–166 (NKTD) and 216–224 (GQSGVGKSS) contribute to the GTP site. 4 residues coordinate Zn(2+): cysteine 298, cysteine 303, histidine 305, and cysteine 311.

The protein belongs to the TRAFAC class YlqF/YawG GTPase family. RsgA subfamily. As to quaternary structure, monomer. Associates with 30S ribosomal subunit, binds 16S rRNA. It depends on Zn(2+) as a cofactor.

It localises to the cytoplasm. Functionally, one of several proteins that assist in the late maturation steps of the functional core of the 30S ribosomal subunit. Helps release RbfA from mature subunits. May play a role in the assembly of ribosomal proteins into the subunit. Circularly permuted GTPase that catalyzes slow GTP hydrolysis, GTPase activity is stimulated by the 30S ribosomal subunit. The polypeptide is Small ribosomal subunit biogenesis GTPase RsgA (Chromohalobacter salexigens (strain ATCC BAA-138 / DSM 3043 / CIP 106854 / NCIMB 13768 / 1H11)).